The chain runs to 813 residues: Leucine--tRNA ligase (813 aa).

Residues 41–51 carry the 'HIGH' region motif; sequence PYPSGTLHMGH. Residues 575–579 carry the 'KMSKS' region motif; sequence KMSKS. Lys578 is a binding site for ATP.

The protein belongs to the class-I aminoacyl-tRNA synthetase family.

Its subcellular location is the cytoplasm. The catalysed reaction is tRNA(Leu) + L-leucine + ATP = L-leucyl-tRNA(Leu) + AMP + diphosphate. This is Leucine--tRNA ligase from Francisella philomiragia subsp. philomiragia (strain ATCC 25017 / CCUG 19701 / FSC 153 / O#319-036).